The following is a 312-amino-acid chain: Probable deoxyhypusine synthase (312 aa).

Lys-285 (nucleophile) is an active-site residue.

Belongs to the deoxyhypusine synthase family. The cofactor is NAD(+).

The enzyme catalyses [eIF5A protein]-L-lysine + spermidine = [eIF5A protein]-deoxyhypusine + propane-1,3-diamine. It functions in the pathway protein modification; eIF5A hypusination. Its function is as follows. Catalyzes the NAD-dependent oxidative cleavage of spermidine and the subsequent transfer of the butylamine moiety of spermidine to the epsilon-amino group of a specific lysine residue of the eIF-5A precursor protein to form the intermediate deoxyhypusine residue. The sequence is that of Probable deoxyhypusine synthase from Saccharolobus islandicus (strain Y.N.15.51 / Yellowstone #2) (Sulfolobus islandicus).